Consider the following 526-residue polypeptide: Inosine-5'-monophosphate dehydrogenase (526 aa).

CBS domains follow at residues 120–179 (FIQD…EDPV) and 183–239 (MATD…PLAS). Residues 276-278 (DSS) and 326-328 (GMG) each bind NAD(+). K(+) is bound by residues glycine 328 and glycine 330. Serine 331 provides a ligand contact to IMP. Residue cysteine 333 coordinates K(+). The Thioimidate intermediate role is filled by cysteine 333. Residues 366–368 (DGG) and 389–390 (GS) contribute to the IMP site. Arginine 439 serves as the catalytic Proton acceptor. Glutamine 451 serves as a coordination point for IMP. Serine 506 contacts K(+). Positions 506–526 (SAQTEGNVHGLHTHEKKLYSS) are disordered. The span at 517-526 (HTHEKKLYSS) shows a compositional bias: basic and acidic residues.

The protein belongs to the IMPDH/GMPR family. Homotetramer. K(+) is required as a cofactor.

The protein localises to the cytoplasm. The catalysed reaction is IMP + NAD(+) + H2O = XMP + NADH + H(+). It participates in secondary metabolite biosynthesis; terpenoid biosynthesis. Mycophenolic acid (MPA) is a non-competitive inhibitor that prevents formation of the closed enzyme conformation by binding to the same site as the amobile flap. In contrast, mizoribine monophosphate (MZP) is a competitive inhibitor that induces the closed conformation. MPA is a potent inhibitor of mammalian IMPDHs but a poor inhibitor of the bacterial enzymes. MZP is a more potent inhibitor of bacterial IMPDH. Its function is as follows. Catalyzes the conversion of inosine 5'-phosphate (IMP) to xanthosine 5'-phosphate (XMP), the first committed and rate-limiting step in the de novo synthesis of guanine nucleotides, and therefore plays an important role in the regulation of cell growth. Part of the gene cluster that mediates the biosynthesis of mycophenolic acid (MPA), the first isolated antibiotic natural product in the world. Does not play a role in the biosynthesis of MPA, but is involved in self resistance to MPA, since MPA acts as an inhibitor of IMP dehydrogenases. In Penicillium roqueforti (strain FM164), this protein is Inosine-5'-monophosphate dehydrogenase.